The primary structure comprises 417 residues: UDP-N-acetylmuramoylalanine--D-glutamate ligase (417 aa).

108–114 (GSNGKTT) lines the ATP pocket.

The protein belongs to the MurCDEF family.

It localises to the cytoplasm. The enzyme catalyses UDP-N-acetyl-alpha-D-muramoyl-L-alanine + D-glutamate + ATP = UDP-N-acetyl-alpha-D-muramoyl-L-alanyl-D-glutamate + ADP + phosphate + H(+). It participates in cell wall biogenesis; peptidoglycan biosynthesis. Functionally, cell wall formation. Catalyzes the addition of glutamate to the nucleotide precursor UDP-N-acetylmuramoyl-L-alanine (UMA). In Chlamydia pneumoniae (Chlamydophila pneumoniae), this protein is UDP-N-acetylmuramoylalanine--D-glutamate ligase.